A 508-amino-acid chain; its full sequence is MALIFAVFFKKIVIDRQIEKLNDLEDEVEKAKLKAKEIVEEAERDAVSKAKEIELKAKEKAYQIKEEIEKEARNSKNEIAQKEARIIKKEEILDGKIEKIEIKSLELEKINDELEEKRKEIDDLRVKQEEELSRVSELTKADAREILLRKVREEMTHDMAITIREFENKLDEEKEKISQKILSTAIGKAAADYVADATVSVINLPNDEMKGRIIGREGRNIRTIEALTGVDVIIDDTPEAVVLSCFDGVKREVARLTIEKLITDGRIHPGKIEEIVNKCKKDIEKEIVAAGEEALIELSIPTMHPEIIKTLGRLKYRTSYGQNVLTHSIEVAKIASTMAAEIGANVELAKRGGLLHDIGKVLVNEIETSHAIVGGEFIKKFGEKQDVINAVMAHHNEVEFETVEAILVQAADAVSASRPGARRETLTAYIKRLENLEEIANSFEGVESSYAIQAGRELRIVINPDKVSDDEATLMSREVAKKIEDTMQYPGQIKVTILRETRAVEYAK.

A KH domain is found at 198-264 (TVSVINLPND…RLTIEKLITD (67 aa)). One can recognise an HD domain in the interval 324 to 417 (VLTHSIEVAK…VQAADAVSAS (94 aa)).

This sequence belongs to the RNase Y family.

Endoribonuclease that initiates mRNA decay. This chain is Ribonuclease Y, found in Fusobacterium nucleatum subsp. nucleatum (strain ATCC 25586 / DSM 15643 / BCRC 10681 / CIP 101130 / JCM 8532 / KCTC 2640 / LMG 13131 / VPI 4355).